Reading from the N-terminus, the 565-residue chain is Acyl-CoA ligase easD (565 aa).

ATP contacts are provided by residues 213–221, 354–359, Asp438, Arg457, and Lys555; these read TSGTSGKQK and HAYGLT. The interval 284 to 354 is SBD1; that stretch reads DMQLMLKTIE…KLRPTWKINH (71 aa). Residues 355-417 are SBD2; it reads AYGLTETGVV…FNSPSCFLGY (63 aa).

This sequence belongs to the ATP-dependent AMP-binding enzyme family.

Its pathway is antibiotic biosynthesis. Acyl-CoA ligase; part of the gene cluster that mediates the biosynthesis of emericellamides, secondary metabolites acting as antibiotics. The biosynthesis of emericellamides initiates from the highly reducing polyketide synthase easB which catalyzes the formation of the linear polyketide chain. EasB produces several polyketides that can be further processed by the downstream enzymes. The polyketides are released from easB as linear polyketide carboxylic acids, which are converted to CoA thioesters by the acyl-CoA ligase easD. The substrates are then loaded onto the acyltransferase easC, which shuttles them to the first thiolation (T) domain of the nonribosomal peptide synthetase easA. EasA then performs condensation of the polyketides with one glycine, two alanine, one valine and one leucine residues. A last step of cyclization leads to the production of emericellamides. In Emericella nidulans (strain FGSC A4 / ATCC 38163 / CBS 112.46 / NRRL 194 / M139) (Aspergillus nidulans), this protein is Acyl-CoA ligase easD.